A 333-amino-acid chain; its full sequence is Phosphoribosylformylglycinamidine cyclo-ligase (333 aa).

This sequence belongs to the AIR synthase family.

The protein resides in the cytoplasm. It carries out the reaction 2-formamido-N(1)-(5-O-phospho-beta-D-ribosyl)acetamidine + ATP = 5-amino-1-(5-phospho-beta-D-ribosyl)imidazole + ADP + phosphate + H(+). The protein operates within purine metabolism; IMP biosynthesis via de novo pathway; 5-amino-1-(5-phospho-D-ribosyl)imidazole from N(2)-formyl-N(1)-(5-phospho-D-ribosyl)glycinamide: step 2/2. This Methanosarcina mazei (strain ATCC BAA-159 / DSM 3647 / Goe1 / Go1 / JCM 11833 / OCM 88) (Methanosarcina frisia) protein is Phosphoribosylformylglycinamidine cyclo-ligase.